A 221-amino-acid chain; its full sequence is Germin-like protein subfamily 1 member 17 (221 aa).

A signal peptide spans Met-1–Ala-21. A disulfide bond links Cys-31 and Cys-48. The region spanning Ser-76–Lys-213 is the Cupin type-1 domain. Residue Asn-77 is glycosylated (N-linked (GlcNAc...) asparagine). Mn(2+) contacts are provided by His-110, His-112, Glu-117, and His-159.

Belongs to the germin family. In terms of assembly, oligomer (believed to be a pentamer but probably hexamer).

The protein localises to the secreted. Its subcellular location is the extracellular space. The protein resides in the apoplast. May play a role in plant defense. Probably has no oxalate oxidase activity even if the active site is conserved. This is Germin-like protein subfamily 1 member 17 from Arabidopsis thaliana (Mouse-ear cress).